Consider the following 749-residue polypeptide: Amyloid-beta A4 precursor protein-binding family A member 2 (749 aa).

Disordered regions lie at residues 1–94 (MAHQ…PEEE) and 130–343 (DTDE…NNIP). Ser11 bears the Phosphoserine mark. Positions 70–80 (GDSSSDYVNNT) are enriched in polar residues. 2 stretches are compositionally biased toward acidic residues: residues 81–94 (SEEE…PEEE) and 131–142 (TDECQEAVEEWT). An STXBP1-binding region spans residues 185-270 (HYCASKEGYQ…SAEACPPIKA (86 aa)). Ser208 carries the phosphoserine modification. A compositionally biased stretch (acidic residues) spans 218–227 (DLEDQEEDID). Polar residues predominate over residues 237-247 (LSMTSITSASE). Residues 305-315 (RTPEERPKWPH) are compositionally biased toward basic and acidic residues. A PID domain is found at 366 to 555 (LIDGIIFAAN…IINTQEMYND (190 aa)). 2 PDZ domains span residues 568–653 (ELQL…NIVS) and 659–735 (TVLI…MPAA).

In terms of assembly, part of a multimeric complex containing STXBP1 and syntaxin-1. Binds to the cytoplasmic domain of amyloid-beta protein, and to the nuclear factor NF-kappa-B/p65 via its PDZ domain. Interacts with the N-terminal domain of NECAB3.

In terms of biological role, putative function in synaptic vesicle exocytosis by binding to STXBP1, an essential component of the synaptic vesicle exocytotic machinery. May modulate processing of the amyloid-beta precursor protein (APP) and hence formation of APP-beta. This Pongo abelii (Sumatran orangutan) protein is Amyloid-beta A4 precursor protein-binding family A member 2 (APBA2).